A 358-amino-acid chain; its full sequence is Mitogen-activated protein kinase hog-1 (358 aa).

The 280-residue stretch at 20 to 299 (YSDLQPVGMG…ATEALSHEYL (280 aa)) folds into the Protein kinase domain. ATP-binding positions include 26-34 (VGMGAFGLV) and Lys-49. Catalysis depends on Asp-141, which acts as the Proton acceptor. Position 171 is a phosphothreonine (Thr-171). The TXY motif lies at 171 to 173 (TGY). Tyr-173 is subject to Phosphotyrosine.

It belongs to the protein kinase superfamily. Ser/Thr protein kinase family. MAP kinase subfamily. HOG1 sub-subfamily. Mg(2+) serves as cofactor. Post-translationally, dually phosphorylated on Thr-171 and Tyr-173, which activates the enzyme. Phosphorylation is induced by fungicides and osmotic stress.

It is found in the cytoplasm. The protein resides in the nucleus. It catalyses the reaction L-seryl-[protein] + ATP = O-phospho-L-seryl-[protein] + ADP + H(+). The catalysed reaction is L-threonyl-[protein] + ATP = O-phospho-L-threonyl-[protein] + ADP + H(+). Activated by tyrosine and threonine phosphorylation. Its function is as follows. Proline-directed serine/threonine-protein kinase involved in a signal transduction pathway that is activated by changes in the osmolarity of the extracellular environment. Controls osmotic regulation of transcription of target genes. Involved in ion flux-mediated turgor regulation. The sequence is that of Mitogen-activated protein kinase hog-1 (hog-1) from Neurospora crassa (strain ATCC 24698 / 74-OR23-1A / CBS 708.71 / DSM 1257 / FGSC 987).